The following is a 249-amino-acid chain: 5'-nucleotidase SurE (249 aa).

A divalent metal cation is bound by residues D8, D9, S39, and N91.

Belongs to the SurE nucleotidase family. The cofactor is a divalent metal cation.

The protein localises to the cytoplasm. The catalysed reaction is a ribonucleoside 5'-phosphate + H2O = a ribonucleoside + phosphate. Functionally, nucleotidase that shows phosphatase activity on nucleoside 5'-monophosphates. The polypeptide is 5'-nucleotidase SurE (Pseudomonas syringae pv. tomato (strain ATCC BAA-871 / DC3000)).